Here is a 459-residue protein sequence, read N- to C-terminus: Protein ABHD15 (459 aa).

The first 28 residues, 1-28 (MPPWAAALALLLAALALLLLRPWKRAVG), serve as a signal peptide directing secretion. Residues aspartate 351 and histidine 382 each act as charge relay system in the active site. Phosphoserine is present on serine 425.

It belongs to the AB hydrolase superfamily. AB hydrolase 4 family. As to quaternary structure, interacts with PDE3B; this interaction regulates PDE3B's stability and expression and, thereby, impacts the antilipolytic action of insulin. In terms of tissue distribution, mainly expressed in adipocytes and adipose depots, followed by a weak expression in liver and pancreas. In white adipose tissue (WAT), only expressed in mature adipocytes and primary adipocytes differentiated from stromal vascular cells (SVCs), but not in undifferentiated SVCs.

The protein resides in the secreted. Functionally, may regulate adipocyte lipolysis and liver lipid accumulation. This is Protein ABHD15 from Mus musculus (Mouse).